We begin with the raw amino-acid sequence, 458 residues long: ATP synthase subunit beta (458 aa).

148–155 provides a ligand contact to ATP; sequence GGAGVGKT.

It belongs to the ATPase alpha/beta chains family. In terms of assembly, F-type ATPases have 2 components, CF(1) - the catalytic core - and CF(0) - the membrane proton channel. CF(1) has five subunits: alpha(3), beta(3), gamma(1), delta(1), epsilon(1). CF(0) has three main subunits: a(1), b(2) and c(9-12). The alpha and beta chains form an alternating ring which encloses part of the gamma chain. CF(1) is attached to CF(0) by a central stalk formed by the gamma and epsilon chains, while a peripheral stalk is formed by the delta and b chains.

The protein localises to the cell inner membrane. The enzyme catalyses ATP + H2O + 4 H(+)(in) = ADP + phosphate + 5 H(+)(out). Produces ATP from ADP in the presence of a proton gradient across the membrane. The catalytic sites are hosted primarily by the beta subunits. The protein is ATP synthase subunit beta of Stutzerimonas stutzeri (strain A1501) (Pseudomonas stutzeri).